The following is a 137-amino-acid chain: Small ribosomal subunit protein uS9 (137 aa).

A compositionally biased stretch (basic and acidic residues) spans Lys106–Ala117. The segment at Lys106–Arg137 is disordered. A compositionally biased stretch (basic residues) spans Lys118–Arg137.

The protein belongs to the universal ribosomal protein uS9 family.

The chain is Small ribosomal subunit protein uS9 from Thermosynechococcus vestitus (strain NIES-2133 / IAM M-273 / BP-1).